The primary structure comprises 115 residues: Nucleoid-associated protein alr5067 (115 aa).

It belongs to the YbaB/EbfC family. Homodimer.

Its subcellular location is the cytoplasm. It is found in the nucleoid. Binds to DNA and alters its conformation. May be involved in regulation of gene expression, nucleoid organization and DNA protection. The sequence is that of Nucleoid-associated protein alr5067 from Nostoc sp. (strain PCC 7120 / SAG 25.82 / UTEX 2576).